The following is a 238-amino-acid chain: Ribosomal RNA small subunit methyltransferase G (238 aa).

S-adenosyl-L-methionine is bound by residues Gly106, Leu111, 157-158 (IE), and Arg170.

The protein belongs to the methyltransferase superfamily. RNA methyltransferase RsmG family.

The protein resides in the cytoplasm. The enzyme catalyses guanosine(527) in 16S rRNA + S-adenosyl-L-methionine = N(7)-methylguanosine(527) in 16S rRNA + S-adenosyl-L-homocysteine. Functionally, specifically methylates the N7 position of guanine in position 527 of 16S rRNA. The polypeptide is Ribosomal RNA small subunit methyltransferase G (Psychrobacter cryohalolentis (strain ATCC BAA-1226 / DSM 17306 / VKM B-2378 / K5)).